The following is a 287-amino-acid chain: MLDDADIHPLFHNAPGTTEFKKLRKRIIRNVREAIDLYGMVEREAREGTKPRWLVCLSGGKDSYTLLAALTELQWRGLLPVEILACNLDQGQPGFPATVLPEFLERMGVPHRIEYQDTYSIVMDKVPAGRTYCALCSRLRRGNLYRIAREEGCSAVLLGHHRDDILETFFMNLFHGGRLATMPPKLVNEEGDLFVLRPLAHVAEADCARFAKALDYPIIPCDLCGSQDGLQRQQVKALLDGWEANSPGRRQVMFKALTNIRPSHMLDPNLFDFAGLGLADAFSENPK.

Positions 58–63 (SGGKDS) match the PP-loop motif motif. [4Fe-4S] cluster-binding residues include C133, C136, and C224.

This sequence belongs to the TtcA family. In terms of assembly, homodimer. Requires Mg(2+) as cofactor. The cofactor is [4Fe-4S] cluster.

The protein resides in the cytoplasm. The catalysed reaction is cytidine(32) in tRNA + S-sulfanyl-L-cysteinyl-[cysteine desulfurase] + AH2 + ATP = 2-thiocytidine(32) in tRNA + L-cysteinyl-[cysteine desulfurase] + A + AMP + diphosphate + H(+). Its pathway is tRNA modification. Its function is as follows. Catalyzes the ATP-dependent 2-thiolation of cytidine in position 32 of tRNA, to form 2-thiocytidine (s(2)C32). The sulfur atoms are provided by the cysteine/cysteine desulfurase (IscS) system. This chain is tRNA-cytidine(32) 2-sulfurtransferase, found in Dinoroseobacter shibae (strain DSM 16493 / NCIMB 14021 / DFL 12).